We begin with the raw amino-acid sequence, 150 residues long: Macrodomain Ter protein (150 aa).

Belongs to the MatP family. As to quaternary structure, homodimer.

The protein localises to the cytoplasm. Functionally, required for spatial organization of the terminus region of the chromosome (Ter macrodomain) during the cell cycle. Prevents early segregation of duplicated Ter macrodomains during cell division. Binds specifically to matS, which is a 13 bp signature motif repeated within the Ter macrodomain. This chain is Macrodomain Ter protein, found in Escherichia coli O81 (strain ED1a).